Consider the following 437-residue polypeptide: Nickel-cobalt-cadmium resistance protein NccC (437 aa).

A signal peptide spans 1–48 (MGAVLKAEANIFRSHPFRPMNQATPKKLRSAPCIGVALLLMATGSIQA).

This sequence belongs to the outer membrane factor (OMF) (TC 1.B.17) family.

Component of the NCC cation-efflux system that confers resistance to nickel, cobalt and cadmium. The protein is Nickel-cobalt-cadmium resistance protein NccC (nccC) of Alcaligenes xylosoxydans xylosoxydans (Achromobacter xylosoxidans).